A 188-amino-acid chain; its full sequence is Trafficking protein particle complex subunit 5 (188 aa).

A Phosphoserine modification is found at serine 10.

This sequence belongs to the TRAPP small subunits family. BET3 subfamily. Component of the multisubunit TRAPP (transport protein particle) complex, which includes at least TRAPPC2, TRAPPC2L, TRAPPC3, TRAPPC3L, TRAPPC4, TRAPPC5, TRAPPC8, TRAPPC9, TRAPPC10, TRAPPC11 and TRAPPC12.

The protein resides in the golgi apparatus. The protein localises to the cis-Golgi network. It is found in the endoplasmic reticulum. Functionally, may play a role in vesicular transport from endoplasmic reticulum to Golgi. This chain is Trafficking protein particle complex subunit 5 (TRAPPC5), found in Homo sapiens (Human).